Consider the following 609-residue polypeptide: Actin-interacting protein 1-2 (609 aa).

WD repeat units follow at residues Glu-2–Asp-42, Glu-54–Asn-93, Val-97–Asp-141, Gly-142–Ser-182, Glu-185–Glu-224, Gly-230–Leu-269, Gly-277–Phe-318, Gly-322–Leu-362, Asn-445–Glu-484, Arg-489–Lys-528, Tyr-532–Met-571, and Ala-576–Gln-609.

As to expression, expressed in leaves, stems, flower buds and flowers.

Its function is as follows. Binds actin. Enhances the F-actin depolymerization activity of actin-depolymerizing factor (ADF) proteins. In Arabidopsis thaliana (Mouse-ear cress), this protein is Actin-interacting protein 1-2.